We begin with the raw amino-acid sequence, 891 residues long: Probable serine/threonine-protein kinase mkcC (891 aa).

Disordered stretches follow at residues 24-70, 85-121, 264-435, 495-526, and 565-588; these read IELN…TATI, ANNNTNQLNKSTSSSSSLNNNKNEDNKSVTASIAPSS, DDPQ…AREK, NSLGSSINKNNSNNTTTTTTTTNTNNKSPEVS, and TTASQSSQAPYHPSHNGNEEDDYD. Low complexity predominate over residues 29–41; that stretch reads QEEQQQPEQQEQP. Residues 45–58 are compositionally biased toward basic and acidic residues; it reads EELKDNNEKIKTSE. 5 stretches are compositionally biased toward low complexity: residues 61 to 70, 86 to 105, 297 to 314, 322 to 360, and 379 to 397; these read TTTTTTTATI, NNNTNQLNKSTSSSSSLNNN, STSNTTGKNTGKNSTTGK, SNSSNVPPSPVLASSASPSPKLKSSSSSIRNSGAISGTS, and TTGNSTTTTTTTTSTTTSS. Over residues 422–432 the composition is skewed to basic residues; that stretch reads RKRKEQKRSRA. Positions 495–522 are enriched in low complexity; it reads NSLGSSINKNNSNNTTTTTTTTNTNNKS. Residues 616 to 864 enclose the Protein kinase domain; the sequence is YKNLKQIGSG…AEQLLKHPWI (249 aa). ATP is bound by residues 622–630 and Lys645; that span reads IGSGGFGSV. The Proton acceptor role is filled by Asp735.

Belongs to the protein kinase superfamily. STE Ser/Thr protein kinase family. STE20 subfamily. It depends on Mg(2+) as a cofactor.

It catalyses the reaction L-seryl-[protein] + ATP = O-phospho-L-seryl-[protein] + ADP + H(+). The enzyme catalyses L-threonyl-[protein] + ATP = O-phospho-L-threonyl-[protein] + ADP + H(+). The protein is Probable serine/threonine-protein kinase mkcC of Dictyostelium discoideum (Social amoeba).